The chain runs to 89 residues: MKEKEAKWVVEGLVTEGHPSGMFRVQLDNGARVLGYISGKIRRKAIRIMQGDRVQIELSHYDLTKGRIIYRLPPPPIPKPKDSEDDSED.

The S1-like domain occupies 1-73 (MKEKEAKWVV…TKGRIIYRLP (73 aa)).

Belongs to the IF-1 family. In terms of assembly, component of the 30S ribosomal translation pre-initiation complex which assembles on the 30S ribosome in the order IF-2 and IF-3, IF-1 and N-formylmethionyl-tRNA(fMet); mRNA recruitment can occur at any time during PIC assembly.

The protein resides in the plastid. It localises to the chloroplast. Its function is as follows. One of the essential components for the initiation of protein synthesis. Stabilizes the binding of IF-2 and IF-3 on the 30S subunit to which N-formylmethionyl-tRNA(fMet) subsequently binds. Helps modulate mRNA selection, yielding the 30S pre-initiation complex (PIC). Upon addition of the 50S ribosomal subunit IF-1, IF-2 and IF-3 are released leaving the mature 70S translation initiation complex. This Jasminum nudiflorum (Winter jasmine) protein is Translation initiation factor IF-1, chloroplastic.